A 475-amino-acid polypeptide reads, in one-letter code: ATP synthase subunit beta 1 (475 aa).

153-160 lines the ATP pocket; that stretch reads GGAGVGKT.

Belongs to the ATPase alpha/beta chains family. In terms of assembly, F-type ATPases have 2 components, CF(1) - the catalytic core - and CF(0) - the membrane proton channel. CF(1) has five subunits: alpha(3), beta(3), gamma(1), delta(1), epsilon(1). CF(0) has three main subunits: a(1), b(2) and c(9-12). The alpha and beta chains form an alternating ring which encloses part of the gamma chain. CF(1) is attached to CF(0) by a central stalk formed by the gamma and epsilon chains, while a peripheral stalk is formed by the delta and b chains.

The protein localises to the cell membrane. The catalysed reaction is ATP + H2O + 4 H(+)(in) = ADP + phosphate + 5 H(+)(out). Functionally, produces ATP from ADP in the presence of a proton gradient across the membrane. The catalytic sites are hosted primarily by the beta subunits. This chain is ATP synthase subunit beta 1, found in Mycoplasmopsis pulmonis (strain UAB CTIP) (Mycoplasma pulmonis).